The primary structure comprises 287 residues: uncharacterized protein (287 aa).

The N-terminal stretch at 1–31 (MLGSMALKLRKWIWASIPSLALILSSCSALV) is a signal peptide.

The protein belongs to the MG439/MG440 family.

This is an uncharacterized protein from Mycoplasma pneumoniae (strain ATCC 29342 / M129 / Subtype 1) (Mycoplasmoides pneumoniae).